The following is a 168-amino-acid chain: Chemoreceptor glutamine deamidase CheD (168 aa).

It belongs to the CheD family. Forms a complex with CheC.

It carries out the reaction L-glutaminyl-[protein] + H2O = L-glutamyl-[protein] + NH4(+). Deamidates glutamine residues to glutamate on methyl-accepting chemotaxis receptors (MCPs). CheD-mediated MCP deamidation is required for productive communication of the conformational signals of the chemoreceptors to the CheA kinase. This is Chemoreceptor glutamine deamidase CheD from Bacillus licheniformis (strain ATCC 14580 / DSM 13 / JCM 2505 / CCUG 7422 / NBRC 12200 / NCIMB 9375 / NCTC 10341 / NRRL NRS-1264 / Gibson 46).